The chain runs to 428 residues: Serine--tRNA ligase (428 aa).

Position 231–233 (231–233 (TAE)) interacts with L-serine. Position 262-264 (262-264 (RSE)) interacts with ATP. Glutamate 285 provides a ligand contact to L-serine. 349–352 (EISS) contributes to the ATP binding site. Serine 385 is an L-serine binding site.

This sequence belongs to the class-II aminoacyl-tRNA synthetase family. Type-1 seryl-tRNA synthetase subfamily. As to quaternary structure, homodimer. The tRNA molecule binds across the dimer.

The protein localises to the cytoplasm. It catalyses the reaction tRNA(Ser) + L-serine + ATP = L-seryl-tRNA(Ser) + AMP + diphosphate + H(+). The enzyme catalyses tRNA(Sec) + L-serine + ATP = L-seryl-tRNA(Sec) + AMP + diphosphate + H(+). It functions in the pathway aminoacyl-tRNA biosynthesis; selenocysteinyl-tRNA(Sec) biosynthesis; L-seryl-tRNA(Sec) from L-serine and tRNA(Sec): step 1/1. Catalyzes the attachment of serine to tRNA(Ser). Is also able to aminoacylate tRNA(Sec) with serine, to form the misacylated tRNA L-seryl-tRNA(Sec), which will be further converted into selenocysteinyl-tRNA(Sec). The polypeptide is Serine--tRNA ligase (Cellvibrio japonicus (strain Ueda107) (Pseudomonas fluorescens subsp. cellulosa)).